Reading from the N-terminus, the 476-residue chain is Protein transport protein Sec61 subunit alpha isoform 1 (476 aa).

At 1–33 (MGIKFLEVIKPFCVILPEIQKPERKIQFKEKVL) the chain is on the cytoplasmic side. The chain crosses the membrane as a helical span at residues 34 to 53 (WTAITLFIFLVCCQIPLFGI). Residues 54-76 (MSSDSADPFYWMRVILASNRGTL) are Lumenal-facing. Residues 77–96 (MELGISPIVTSGLIMQLLAG) form a helical membrane-spanning segment. Over 97 to 117 (AKIIEVGDTPKDRALFNGAQK) the chain is Cytoplasmic. A helical membrane pass occupies residues 118–138 (LFGMTITIGQSIVYVMTGMYG). Topologically, residues 139–144 (DPSEMG) are lumenal. The chain crosses the membrane as a helical span at residues 145 to 165 (AGVCLLITIQLFVAGLIVLLL). The Cytoplasmic segment spans residues 166 to 172 (DELLQKG). The chain crosses the membrane as a helical span at residues 173-193 (YGLGSGISLFIATNICETIVW). Over 194 to 240 (KAFSPTTVNTGRGMEFEGAIIALFHLLATRTDKVRALREAFYRQNLP) the chain is Lumenal. Residues 241-261 (NLMNLIATIFVFAVVIYFQGF) traverse the membrane as a helical segment. Residues 262–288 (RVDLPIKSARYRGQYNTYPIKLFYTSN) lie on the Cytoplasmic side of the membrane. The chain crosses the membrane as a helical span at residues 289–309 (IPIILQSALVSNLYVISQMLS). The Lumenal segment spans residues 310-354 (ARFSGNLLVSLLGTWSDTSSGGPARAYPVGGLCYYLSPPESFGSV). A helical membrane pass occupies residues 355 to 375 (LEDPVHAVVYIVFMLGSCAFF). The Cytoplasmic segment spans residues 376-420 (SKTWIEVSGSSAKDVAKQLKEQQMVMRGHRETSMVHELNRYIPTA). A helical membrane pass occupies residues 421-441 (AAFGGLCIGALSVLADFLGAI). Topologically, residues 442–445 (GSGT) are lumenal. Residues 446–462 (GILLAVTIIYQYFEIFV) form a helical membrane-spanning segment. The Cytoplasmic segment spans residues 463–476 (KEQSEVGSMGALLF).

This sequence belongs to the SecY/SEC61-alpha family. As to quaternary structure, the SEC61 channel-forming translocon complex consists of channel-forming core components SEC61A1, SEC61B and SEC61G and different auxiliary components such as SEC62 and SEC63. The SEC61 channel associates with the multi-pass translocon (MPT) complex.

The protein localises to the endoplasmic reticulum membrane. Component of SEC61 channel-forming translocon complex that mediates transport of signal peptide-containing precursor polypeptides across the endoplasmic reticulum (ER). Forms a ribosome receptor and a gated pore in the ER membrane, both functions required for cotranslational translocation of nascent polypeptides. May cooperate with auxiliary protein SEC62, SEC63 and HSPA5/BiP to enable post-translational transport of small presecretory proteins. The SEC61 channel is also involved in ER membrane insertion of transmembrane proteins: it mediates membrane insertion of the first few transmembrane segments of proteins, while insertion of subsequent transmembrane regions of multi-pass membrane proteins is mediated by the multi-pass translocon (MPT) complex. The SEC61 channel cooperates with the translocating protein TRAM1 to import nascent proteins into the ER. Controls the passive efflux of calcium ions from the ER lumen to the cytosol through SEC61 channel, contributing to the maintenance of cellular calcium homeostasis. Plays a critical role in nephrogenesis, specifically at pronephros stage. In Bos taurus (Bovine), this protein is Protein transport protein Sec61 subunit alpha isoform 1 (SEC61A1).